The chain runs to 825 residues: Hypoxia-inducible factor 1-alpha (825 aa).

Residues 1–30 are disordered; it reads MEGAGGENEKKKMSSERRKEKSRDAARSRR. An interaction with TSGA10 region spans residues 1-401; sequence MEGAGGENEK…KEPDALTLLA (401 aa). A compositionally biased stretch (basic and acidic residues) spans 7–30; sequence ENEKKKMSSERRKEKSRDAARSRR. The 54-residue stretch at 17-70 folds into the bHLH domain; the sequence is RRKEKSRDAARSRRSKESEVFYELAHQLPLPHNVSSHLDKASVMRLTISYLRVR. The DNA-binding stretch occupies residues 21-30; sequence KSRDAARSRR. A PAS 1 domain is found at 85–158; sequence KAQMNCFYLK…THRNGPVRKG (74 aa). Residues 170–191 form a required for heterodimer formation with ARNT region; that stretch reads RMKCTLTSRGRTMNIKSATWKV. Residues 228–298 form the PAS 2 domain; sequence PHPSNIEIPL…KTHHDMFTKG (71 aa). S247 is subject to Phosphoserine; by CK1. The 44-residue stretch at 302-345 folds into the PAC domain; that stretch reads TGQYRMLAKRGGYVWVETQATVIYNTKDSQPQCIVCVNYVVSGI. Residues 401-602 form an ODD region; sequence APAAGDTIIS…STVTGFQQTQ (202 aa). The residue at position 402 (P402) is a 4-hydroxyproline. Residues 492–516 show a composition bias toward polar residues; it reads QIQDQPASPSDGSTRQSSPEPNSPS. The disordered stretch occupies residues 492-520; the sequence is QIQDQPASPSDGSTRQSSPEPNSPSEYCF. The segment at 530-574 is NTAD; that stretch reads FKLELVEKLFAEDTEAKNPFSAQDTDLDLEMLAPYIPMDDDFQLR. K531 carries the post-translational modification N6-acetyllysine; alternate. K531 participates in a covalent cross-link: Glycyl lysine isopeptide (Lys-Gly) (interchain with G-Cter in ubiquitin); alternate. Glycyl lysine isopeptide (Lys-Gly) (interchain with G-Cter in ubiquitin) cross-links involve residues K537 and K546. S550 carries the phosphoserine; by GSK3-beta modification. T554 bears the Phosphothreonine; by GSK3-beta mark. Residue P563 is modified to 4-hydroxyproline. Phosphoserine; by PLK3 is present on S575. The tract at residues 575–784 is ID; the sequence is SFDQLSPLES…SDLACRLLGQ (210 aa). Disordered regions lie at residues 579–602 and 654–674; these read LSPLESNSPSPPSVSTVTGFQQTQ and AKASAYSGTHSRTASPDRAGK. Position 588 is a phosphoserine; by GSK3-beta (S588). Polar residues predominate over residues 654–667; sequence AKASAYSGTHSRTA. A Phosphoserine; by PLK3 modification is found at S657. Positions 717-721 match the Nuclear localization signal motif; it reads RKRKM. Residues 785-825 are CTAD; it reads SMDESGLPQLTSYDCEVNAPIQGSRNLLQGEELLRALDQVN. The residue at position 799 (C799) is an S-nitrosocysteine. The residue at position 802 (N802) is a (3S)-3-hydroxyasparagine.

Interacts with the ARNT; forms a heterodimer that binds core DNA sequence 5'-TACGTG-3' within the hypoxia response element (HRE) of target gene promoters. Interacts with COPS5; the interaction increases the transcriptional activity of HIF1A through increased stability. Interacts with EP300 (via TAZ-type 1 domains); the interaction is stimulated in response to hypoxia and inhibited by CITED2. Interacts with CREBBP (via TAZ-type 1 domains). Interacts with NCOA1, NCOA2, APEX1 and HSP90. Interacts (hydroxylated within the ODD domain) with VHLL (via beta domain); the interaction, leads to polyubiquitination and subsequent HIF1A proteasomal degradation. During hypoxia, sumoylated HIF1A also binds VHL; the interaction promotes the ubiquitination of HIF1A. Interacts with SENP1; the interaction desumoylates HIF1A resulting in stabilization and activation of transcription. Interacts (via the ODD domain) with NAA10; the interaction appears not to acetylate HIF1A nor have any affect on protein stability, during hypoxia. Interacts with RWDD3; the interaction enhances HIF1A sumoylation. Interacts with TSGA10. Interacts with HIF3A. Interacts with RORA (via the DNA binding domain); the interaction enhances HIF1A transcription under hypoxia through increasing protein stability. Interaction with PSMA7 inhibits the transactivation activity of HIF1A under both normoxic and hypoxia-mimicking conditions. Interacts with USP20. Interacts with RACK1; promotes HIF1A ubiquitination and proteasome-mediated degradation. Interacts (via N-terminus) with USP19. Interacts with SIRT2. Interacts (deacetylated form) with EGLN1. Interacts with CBFA2T3. Interacts with HSP90AA1 and HSP90AB1. Interacts with DCUN1D1; this interaction increases the interaction between VHL and DCUN1D1. Interacts with HIF1AN. In terms of processing, S-nitrosylation of Cys-799 may be responsible for increased recruitment of p300 coactivator necessary for transcriptional activity of HIF-1 complex. Post-translationally, acetylation of Lys-531 by ARD1 increases interaction with VHL and stimulates subsequent proteasomal degradation. Deacetylated by SIRT2 increases its interaction with and hydroxylation by EGLN1 thereby inactivating HIF1A activity by inducing its proteasomal degradation. Ubiquitinated; in normoxia, following hydroxylation and interaction with VHL. Lys-531 appears to be the principal site of ubiquitination. Clioquinol, the Cu/Zn-chelator, inhibits ubiquitination through preventing hydroxylation at Asn-802. Ubiquitinated by E3 ligase VHL. Deubiquitinated by UCHL1. In terms of processing, requires phosphorylation for DNA-binding. Phosphorylation at Ser-247 by CSNK1D/CK1 represses kinase activity and impairs ARNT binding. Phosphorylation by GSK3-beta and PLK3 promote degradation by the proteasome. Post-translationally, the iron and 2-oxoglutarate dependent 3-hydroxylation of asparagine is (S) stereospecific within HIF CTAD domains. Sumoylated; with SUMO1 under hypoxia. Sumoylation is enhanced through interaction with RWDD3. Both sumoylation and desumoylation seem to be involved in the regulation of its stability during hypoxia. Sumoylation can promote either its stabilization or its VHL-dependent degradation by promoting hydroxyproline-independent HIF1A-VHL complex binding, thus leading to HIF1A ubiquitination and proteasomal degradation. Desumoylation by SENP1 increases its stability amd transcriptional activity. There is a disaccord between various publications on the effect of sumoylation and desumoylation on its stability and transcriptional activity. In terms of processing, in normoxia, is hydroxylated on Pro-402 and Pro-563 in the oxygen-dependent degradation domain (ODD) by EGLN1/PHD2 and EGLN2/PHD1. EGLN3/PHD3 has also been shown to hydroxylate Pro-563. The hydroxylated prolines promote interaction with VHL, initiating rapid ubiquitination and subsequent proteasomal degradation. Deubiquitinated by USP20. Under hypoxia, proline hydroxylation is impaired and ubiquitination is attenuated, resulting in stabilization. In normoxia, is hydroxylated on Asn-802 by HIF1AN, thus abrogating interaction with CREBBP and EP300 and preventing transcriptional activation. Repressed by iron ion, via Fe(2+) prolyl hydroxylase (PHD) enzymes-mediated hydroxylation and subsequent proteasomal degradation. Expressed in the kidney, higher expression is seen in the renal medulla than in the cortex. Expressed also in the perivenous zone of the liver.

It localises to the cytoplasm. The protein localises to the nucleus. Its subcellular location is the nucleus speckle. With respect to regulation, induced by reactive oxygen species (ROS). Functions as a master transcriptional regulator of the adaptive response to hypoxia. Under hypoxic conditions, activates the transcription of over 40 genes, including erythropoietin, glucose transporters, glycolytic enzymes, vascular endothelial growth factor, HILPDA, and other genes whose protein products increase oxygen delivery or facilitate metabolic adaptation to hypoxia. Plays an essential role in embryonic vascularization, tumor angiogenesis and pathophysiology of ischemic disease. Heterodimerizes with ARNT; heterodimer binds to core DNA sequence 5'-TACGTG-3' within the hypoxia response element (HRE) of target gene promoters. Activation requires recruitment of transcriptional coactivators such as CREBBP and EP300. Activity is enhanced by interaction with NCOA1 and/or NCOA2. Interaction with redox regulatory protein APEX1 seems to activate CTAD and potentiates activation by NCOA1 and CREBBP. Involved in the axonal distribution and transport of mitochondria in neurons during hypoxia. The chain is Hypoxia-inducible factor 1-alpha (Hif1a) from Rattus norvegicus (Rat).